The chain runs to 223 residues: Deoxyribose-phosphate aldolase (223 aa).

The active-site Proton donor/acceptor is Asp-91. Lys-153 functions as the Schiff-base intermediate with acetaldehyde in the catalytic mechanism. Catalysis depends on Lys-182, which acts as the Proton donor/acceptor.

It belongs to the DeoC/FbaB aldolase family. DeoC type 1 subfamily.

The protein resides in the cytoplasm. It catalyses the reaction 2-deoxy-D-ribose 5-phosphate = D-glyceraldehyde 3-phosphate + acetaldehyde. It participates in carbohydrate degradation; 2-deoxy-D-ribose 1-phosphate degradation; D-glyceraldehyde 3-phosphate and acetaldehyde from 2-deoxy-alpha-D-ribose 1-phosphate: step 2/2. In terms of biological role, catalyzes a reversible aldol reaction between acetaldehyde and D-glyceraldehyde 3-phosphate to generate 2-deoxy-D-ribose 5-phosphate. This Streptococcus pyogenes serotype M2 (strain MGAS10270) protein is Deoxyribose-phosphate aldolase.